Here is a 318-residue protein sequence, read N- to C-terminus: Transaldolase (318 aa).

Residue Lys-126 is the Schiff-base intermediate with substrate of the active site.

The protein belongs to the transaldolase family. Type 1 subfamily. In terms of assembly, homodimer.

It is found in the cytoplasm. It carries out the reaction D-sedoheptulose 7-phosphate + D-glyceraldehyde 3-phosphate = D-erythrose 4-phosphate + beta-D-fructose 6-phosphate. It participates in carbohydrate degradation; pentose phosphate pathway; D-glyceraldehyde 3-phosphate and beta-D-fructose 6-phosphate from D-ribose 5-phosphate and D-xylulose 5-phosphate (non-oxidative stage): step 2/3. Transaldolase is important for the balance of metabolites in the pentose-phosphate pathway. This is Transaldolase from Cupriavidus metallidurans (strain ATCC 43123 / DSM 2839 / NBRC 102507 / CH34) (Ralstonia metallidurans).